The primary structure comprises 433 residues: Transcobalamin-1 (433 aa).

Residues 1–23 form the signal peptide; the sequence is MRQSHQLPLVGLLLFSFIPSQLC. The interval 24–310 is globular N-terminal alpha domain; that stretch reads EICEVSEENY…DINKDSSCVS (287 aa). 3 disulfide bridges follow: Cys-26–Cys-265, Cys-105–Cys-308, and Cys-155–Cys-197. Residue 142-146 coordinates cyanocob(III)alamin; that stretch reads TNYYQ. Residue Asn-160 is glycosylated (N-linked (GlcNAc...) asparagine). Asp-186 contacts cyanocob(III)alamin. The N-linked (GlcNAc...) asparagine glycan is linked to Asn-216. Residues Asn-240 and Gln-289 each contribute to the cyanocob(III)alamin site. The segment at 311–332 is flexible linker; it reads ASGNFNISADEPITVTPPDSQS. N-linked (GlcNAc...) asparagine glycosylation is found at Asn-316, Asn-337, Asn-343, Asn-349, Asn-354, and Asn-369. A globular C-terminal beta domain region spans residues 333 to 433; the sequence is YISVNYSVRI…ENLEVRWSKY (101 aa). Residue 385-386 participates in cyanocob(III)alamin binding; it reads YI. Cys-388 and Cys-393 are disulfide-bonded. Cyanocob(III)alamin is bound by residues 402-404, Leu-411, and Tyr-433; that span reads WEL.

It belongs to the eukaryotic cobalamin transport proteins family. In terms of processing, contains about 30% carbohydrates. Produced by the salivary glands of the oral cavity, in response to ingestion of food. Major constituent of secondary granules in neutrophils.

It is found in the secreted. Binds vitamin B12 with femtomolar affinity and protects it from the acidic environment of the stomach. In Homo sapiens (Human), this protein is Transcobalamin-1 (TCN1).